Consider the following 89-residue polypeptide: Small ribosomal subunit protein uS14A (89 aa).

This sequence belongs to the universal ribosomal protein uS14 family. Part of the 30S ribosomal subunit. Contacts proteins S3 and S10.

Binds 16S rRNA, required for the assembly of 30S particles and may also be responsible for determining the conformation of the 16S rRNA at the A site. This is Small ribosomal subunit protein uS14A from Ligilactobacillus salivarius (strain UCC118) (Lactobacillus salivarius).